The following is a 257-amino-acid chain: Tryptophan synthase alpha chain (257 aa).

Residues Glu-47 and Asp-58 each act as proton acceptor in the active site.

The protein belongs to the TrpA family. Tetramer of two alpha and two beta chains.

It catalyses the reaction (1S,2R)-1-C-(indol-3-yl)glycerol 3-phosphate + L-serine = D-glyceraldehyde 3-phosphate + L-tryptophan + H2O. It functions in the pathway amino-acid biosynthesis; L-tryptophan biosynthesis; L-tryptophan from chorismate: step 5/5. The alpha subunit is responsible for the aldol cleavage of indoleglycerol phosphate to indole and glyceraldehyde 3-phosphate. This chain is Tryptophan synthase alpha chain, found in Listeria welshimeri serovar 6b (strain ATCC 35897 / DSM 20650 / CCUG 15529 / CIP 8149 / NCTC 11857 / SLCC 5334 / V8).